Here is a 692-residue protein sequence, read N- to C-terminus: Elongation factor G (692 aa).

A tr-type G domain is found at 8–283; the sequence is DKYRNIGIMA…AVVDYMPSPL (276 aa). GTP contacts are provided by residues 17–24, 81–85, and 135–138; these read AHIDAGKT, DTPGH, and NKMD.

This sequence belongs to the TRAFAC class translation factor GTPase superfamily. Classic translation factor GTPase family. EF-G/EF-2 subfamily.

The protein localises to the cytoplasm. Its function is as follows. Catalyzes the GTP-dependent ribosomal translocation step during translation elongation. During this step, the ribosome changes from the pre-translocational (PRE) to the post-translocational (POST) state as the newly formed A-site-bound peptidyl-tRNA and P-site-bound deacylated tRNA move to the P and E sites, respectively. Catalyzes the coordinated movement of the two tRNA molecules, the mRNA and conformational changes in the ribosome. This is Elongation factor G from Trichlorobacter lovleyi (strain ATCC BAA-1151 / DSM 17278 / SZ) (Geobacter lovleyi).